Reading from the N-terminus, the 206-residue chain is Ribosomal RNA large subunit methyltransferase E (206 aa).

S-adenosyl-L-methionine contacts are provided by G61, W63, D81, D97, and D122. K162 acts as the Proton acceptor in catalysis.

The protein belongs to the class I-like SAM-binding methyltransferase superfamily. RNA methyltransferase RlmE family.

The protein localises to the cytoplasm. It carries out the reaction uridine(2552) in 23S rRNA + S-adenosyl-L-methionine = 2'-O-methyluridine(2552) in 23S rRNA + S-adenosyl-L-homocysteine + H(+). Its function is as follows. Specifically methylates the uridine in position 2552 of 23S rRNA at the 2'-O position of the ribose in the fully assembled 50S ribosomal subunit. The sequence is that of Ribosomal RNA large subunit methyltransferase E from Neisseria meningitidis serogroup C / serotype 2a (strain ATCC 700532 / DSM 15464 / FAM18).